We begin with the raw amino-acid sequence, 261 residues long: L-erythrulose-1-phosphate isomerase (261 aa).

Residue His99 is the Electrophile of the active site. Glu172 (proton acceptor) is an active-site residue.

This sequence belongs to the triosephosphate isomerase family.

The catalysed reaction is L-erythrulose 1-phosphate = D-erythrulose 4-phosphate. It functions in the pathway carbohydrate metabolism. Its function is as follows. Involved in catabolism of D-apiose. Catalyzes the isomerization of L-erythrulose 1-phosphate to D-erythrulose 4-phosphate. The chain is L-erythrulose-1-phosphate isomerase from Rhizobium rhizogenes (strain K84 / ATCC BAA-868) (Agrobacterium radiobacter).